The following is a 240-amino-acid chain: Uridylate kinase (240 aa).

Residue Lys-12–Gly-15 coordinates ATP. The segment at Gly-20–Gly-25 is involved in allosteric activation by GTP. UMP is bound at residue Gly-54. Residues Gly-55 and Arg-59 each contribute to the ATP site. UMP contacts are provided by residues Asp-74 and Thr-135–Thr-142. 3 residues coordinate ATP: Asn-163, Tyr-169, and Asp-172.

This sequence belongs to the UMP kinase family. In terms of assembly, homohexamer.

It localises to the cytoplasm. The enzyme catalyses UMP + ATP = UDP + ADP. The protein operates within pyrimidine metabolism; CTP biosynthesis via de novo pathway; UDP from UMP (UMPK route): step 1/1. Allosterically activated by GTP. Inhibited by UTP. In terms of biological role, catalyzes the reversible phosphorylation of UMP to UDP. In Levilactobacillus brevis (strain ATCC 367 / BCRC 12310 / CIP 105137 / JCM 1170 / LMG 11437 / NCIMB 947 / NCTC 947) (Lactobacillus brevis), this protein is Uridylate kinase.